The sequence spans 145 residues: D-aminoacyl-tRNA deacylase (145 aa).

Positions 137–138 (GP) match the Gly-cisPro motif, important for rejection of L-amino acids motif.

This sequence belongs to the DTD family. Homodimer.

The protein localises to the cytoplasm. It catalyses the reaction glycyl-tRNA(Ala) + H2O = tRNA(Ala) + glycine + H(+). The catalysed reaction is a D-aminoacyl-tRNA + H2O = a tRNA + a D-alpha-amino acid + H(+). An aminoacyl-tRNA editing enzyme that deacylates mischarged D-aminoacyl-tRNAs. Also deacylates mischarged glycyl-tRNA(Ala), protecting cells against glycine mischarging by AlaRS. Acts via tRNA-based rather than protein-based catalysis; rejects L-amino acids rather than detecting D-amino acids in the active site. By recycling D-aminoacyl-tRNA to D-amino acids and free tRNA molecules, this enzyme counteracts the toxicity associated with the formation of D-aminoacyl-tRNA entities in vivo and helps enforce protein L-homochirality. In Pseudomonas savastanoi pv. phaseolicola (strain 1448A / Race 6) (Pseudomonas syringae pv. phaseolicola (strain 1448A / Race 6)), this protein is D-aminoacyl-tRNA deacylase.